The primary structure comprises 124 residues: Small ribosomal subunit protein uS12 (124 aa).

Aspartate 89 carries the 3-methylthioaspartic acid modification.

The protein belongs to the universal ribosomal protein uS12 family. As to quaternary structure, part of the 30S ribosomal subunit. Contacts proteins S8 and S17. May interact with IF1 in the 30S initiation complex.

Its function is as follows. With S4 and S5 plays an important role in translational accuracy. In terms of biological role, interacts with and stabilizes bases of the 16S rRNA that are involved in tRNA selection in the A site and with the mRNA backbone. Located at the interface of the 30S and 50S subunits, it traverses the body of the 30S subunit contacting proteins on the other side and probably holding the rRNA structure together. The combined cluster of proteins S8, S12 and S17 appears to hold together the shoulder and platform of the 30S subunit. This is Small ribosomal subunit protein uS12 from Treponema pallidum subsp. pallidum (strain SS14).